The sequence spans 38 residues: Photosystem II reaction center protein L (38 aa).

Residues 17–37 traverse the membrane as a helical segment; sequence SLFIGLLLVLVLALLFSSYFF.

This sequence belongs to the PsbL family. As to quaternary structure, PSII is composed of 1 copy each of membrane proteins PsbA, PsbB, PsbC, PsbD, PsbE, PsbF, PsbH, PsbI, PsbJ, PsbK, PsbL, PsbM, PsbT, PsbX, PsbY, PsbZ, Psb30/Ycf12, peripheral proteins PsbO, CyanoQ (PsbQ), PsbU, PsbV and a large number of cofactors. It forms dimeric complexes.

The protein resides in the cellular thylakoid membrane. Its function is as follows. One of the components of the core complex of photosystem II (PSII). PSII is a light-driven water:plastoquinone oxidoreductase that uses light energy to abstract electrons from H(2)O, generating O(2) and a proton gradient subsequently used for ATP formation. It consists of a core antenna complex that captures photons, and an electron transfer chain that converts photonic excitation into a charge separation. This subunit is found at the monomer-monomer interface and is required for correct PSII assembly and/or dimerization. This Acaryochloris marina (strain MBIC 11017) protein is Photosystem II reaction center protein L.